The primary structure comprises 335 residues: Pyridoxal 5'-phosphate synthase subunit PdxS (335 aa).

Aspartate 30 contacts D-ribose 5-phosphate. Lysine 87 acts as the Schiff-base intermediate with D-ribose 5-phosphate in catalysis. Glycine 159 provides a ligand contact to D-ribose 5-phosphate. Arginine 171 is a binding site for D-glyceraldehyde 3-phosphate. D-ribose 5-phosphate-binding positions include glycine 257 and 278–279; that span reads GS.

It belongs to the PdxS/SNZ family. In the presence of PdxT, forms a dodecamer of heterodimers.

It carries out the reaction aldehydo-D-ribose 5-phosphate + D-glyceraldehyde 3-phosphate + L-glutamine = pyridoxal 5'-phosphate + L-glutamate + phosphate + 3 H2O + H(+). The protein operates within cofactor biosynthesis; pyridoxal 5'-phosphate biosynthesis. In terms of biological role, catalyzes the formation of pyridoxal 5'-phosphate from ribose 5-phosphate (RBP), glyceraldehyde 3-phosphate (G3P) and ammonia. The ammonia is provided by the PdxT subunit. Can also use ribulose 5-phosphate and dihydroxyacetone phosphate as substrates, resulting from enzyme-catalyzed isomerization of RBP and G3P, respectively. This chain is Pyridoxal 5'-phosphate synthase subunit PdxS, found in Thermococcus gammatolerans (strain DSM 15229 / JCM 11827 / EJ3).